A 379-amino-acid chain; its full sequence is MNNTEFYDRLGVSKDASQDEIKKAYRRMSKKYHPDINKETGAEEKYKEVQEAYETLSDTQKRAAYDQYGAAGANGGFGGFDGGGFGGFDGGGFGGFEDIFSSFFGGGGMRNPNAPRQGDDLQYRVNLSFEEAIFGAEKEVSYNRESSCHTCSGSGAKPGTSPVTCQKCHGSGVINVDTQTPLGTMRRQVTCDVCQGSGQEIKEKCPTCHGTGHEKKTHKVSVKIPAGVETGQQIRLTGQGEAGFNGGPYGDLFVIINVLPSQQFERNGSTIYYTLKISFVQAALGDTIDIPTVHGAVEMSIPAGTQTGKTFRLRGKGAPKLRGGGQGDQHVTVNIVTPTKLNDAQKEALHAFAEASGDKMVHPKKKGFFDKVKDALDVD.

The 65-residue stretch at 5 to 69 (EFYDRLGVSK…QKRAAYDQYG (65 aa)) folds into the J domain. A CR-type zinc finger spans residues 135–217 (GAEKEVSYNR…CHGTGHEKKT (83 aa)). Zn(2+) is bound by residues Cys-148, Cys-151, Cys-165, Cys-168, Cys-191, Cys-194, Cys-205, and Cys-208. CXXCXGXG motif repeat units lie at residues 148-155 (CHTCSGSG), 165-172 (CQKCHGSG), 191-198 (CDVCQGSG), and 205-212 (CPTCHGTG).

It belongs to the DnaJ family. As to quaternary structure, homodimer. Requires Zn(2+) as cofactor.

Its subcellular location is the cytoplasm. Participates actively in the response to hyperosmotic and heat shock by preventing the aggregation of stress-denatured proteins and by disaggregating proteins, also in an autonomous, DnaK-independent fashion. Unfolded proteins bind initially to DnaJ; upon interaction with the DnaJ-bound protein, DnaK hydrolyzes its bound ATP, resulting in the formation of a stable complex. GrpE releases ADP from DnaK; ATP binding to DnaK triggers the release of the substrate protein, thus completing the reaction cycle. Several rounds of ATP-dependent interactions between DnaJ, DnaK and GrpE are required for fully efficient folding. Also involved, together with DnaK and GrpE, in the DNA replication of plasmids through activation of initiation proteins. The chain is Chaperone protein DnaJ from Streptococcus agalactiae serotype III (strain NEM316).